The following is a 209-amino-acid chain: Molybdenum cofactor guanylyltransferase (209 aa).

GTP-binding positions include 14 to 16 (LAG), K31, and D104. D104 lines the Mg(2+) pocket.

It belongs to the MobA family. In terms of assembly, monomer. Requires Mg(2+) as cofactor.

The protein localises to the cytoplasm. The enzyme catalyses Mo-molybdopterin + GTP + H(+) = Mo-molybdopterin guanine dinucleotide + diphosphate. In terms of biological role, transfers a GMP moiety from GTP to Mo-molybdopterin (Mo-MPT) cofactor (Moco or molybdenum cofactor) to form Mo-molybdopterin guanine dinucleotide (Mo-MGD) cofactor. This is Molybdenum cofactor guanylyltransferase from Helicobacter pylori (strain J99 / ATCC 700824) (Campylobacter pylori J99).